Here is a 192-residue protein sequence, read N- to C-terminus: Adenylate kinase (192 aa).

10-18 (GVPGVGGTT) is a binding site for ATP.

The protein belongs to the archaeal adenylate kinase family. Monomer.

The protein resides in the cytoplasm. The enzyme catalyses AMP + ATP = 2 ADP. The sequence is that of Adenylate kinase (adkA) from Methanothermococcus thermolithotrophicus (Methanococcus thermolithotrophicus).